Consider the following 354-residue polypeptide: MISELQQKITVLKDLLKTNKADAILIGSDQNRFWLTNFPSSAGWLIITSNKAKLFIDGRYYEAARNFINPIVEVELFVSFKQVKAFCESNGINHLLIEGDYLTFNYQDWIQAICKQYTVINAQEIRRVKLPSEIQAIEKAVDITRKVAVKLKRFIKPKMTELFISQWITNELVKQGGAKNSFDPIVATGKNGANPHHKPTKTIVKEGDFITCDFGTIYNGYCSDITRTFLVGKKPKSAKLLSAYKKVEEANLAGINAVNTTLTGSQVDKVCRDIIENSEFKDFFVHSTGHGVGIDIHEMPNVSQSYNKLLCENGVVTIEPGIYIPNLGGIRIEDMVLVKKEKSVWLSKSIPRAF.

Residues Asp-213, Asp-224, His-290, Glu-319, and Glu-333 each coordinate Mn(2+).

This sequence belongs to the peptidase M24B family. Mn(2+) serves as cofactor.

The enzyme catalyses Release of any N-terminal amino acid, including proline, that is linked to proline, even from a dipeptide or tripeptide.. This is Putative Xaa-Pro aminopeptidase (pepP) from Mycoplasma genitalium (strain ATCC 33530 / DSM 19775 / NCTC 10195 / G37) (Mycoplasmoides genitalium).